A 275-amino-acid polypeptide reads, in one-letter code: MSALRPSTGTITRGTPTSADLLLQLRERQPLVQCITNAVVTGFTANVLLALGAAPAMTDVPTESGPFARIASGVLINLGTPHAEQREAAVEAAHAARDAGTPWVLDPVAVGALPVRTRLAHELVALSPTIVRGNASEIIALATGGAGGRGVDATDEVEAALDAASLLARTYGTVVAVSGAVDHITDGHRLVRVHTGDAWLTKVTGGGCALGAVMTAFASTDPDPLRAAVAATSGYTIAADIAAEGARGPGSFAVGLLDALDAVTPELVAQSERLS.

Residue Met57 coordinates substrate. ATP contacts are provided by Arg132 and Ser178. Gly205 is a binding site for substrate.

The protein belongs to the Thz kinase family. Mg(2+) is required as a cofactor.

The enzyme catalyses 5-(2-hydroxyethyl)-4-methylthiazole + ATP = 4-methyl-5-(2-phosphooxyethyl)-thiazole + ADP + H(+). Its pathway is cofactor biosynthesis; thiamine diphosphate biosynthesis; 4-methyl-5-(2-phosphoethyl)-thiazole from 5-(2-hydroxyethyl)-4-methylthiazole: step 1/1. In terms of biological role, catalyzes the phosphorylation of the hydroxyl group of 4-methyl-5-beta-hydroxyethylthiazole (THZ). In Clavibacter sepedonicus (Clavibacter michiganensis subsp. sepedonicus), this protein is Hydroxyethylthiazole kinase.